Here is a 369-residue protein sequence, read N- to C-terminus: Phospho-N-acetylmuramoyl-pentapeptide-transferase (369 aa).

The next 10 helical transmembrane spans lie at 30–50 (AAAI…IGYL), 73–93 (LPTM…LLWA), 99–119 (YVWL…IDDY), 140–160 (VSLG…SVLL), 171–191 (LMID…TAVS), 202–222 (GLAA…AYLT), 239–259 (GGEV…FLWF), 266–286 (IFMG…IALL), 291–311 (LLLP…SLQV), and 346–366 (KIVI…LMTL).

Belongs to the glycosyltransferase 4 family. MraY subfamily. Requires Mg(2+) as cofactor.

Its subcellular location is the cell inner membrane. The enzyme catalyses UDP-N-acetyl-alpha-D-muramoyl-L-alanyl-gamma-D-glutamyl-meso-2,6-diaminopimeloyl-D-alanyl-D-alanine + di-trans,octa-cis-undecaprenyl phosphate = di-trans,octa-cis-undecaprenyl diphospho-N-acetyl-alpha-D-muramoyl-L-alanyl-D-glutamyl-meso-2,6-diaminopimeloyl-D-alanyl-D-alanine + UMP. It functions in the pathway cell wall biogenesis; peptidoglycan biosynthesis. Functionally, catalyzes the initial step of the lipid cycle reactions in the biosynthesis of the cell wall peptidoglycan: transfers peptidoglycan precursor phospho-MurNAc-pentapeptide from UDP-MurNAc-pentapeptide onto the lipid carrier undecaprenyl phosphate, yielding undecaprenyl-pyrophosphoryl-MurNAc-pentapeptide, known as lipid I. This Chlorobium phaeobacteroides (strain BS1) protein is Phospho-N-acetylmuramoyl-pentapeptide-transferase.